The primary structure comprises 310 residues: N-acetyl-gamma-glutamyl-phosphate reductase (310 aa).

Cysteine 117 is a catalytic residue.

Belongs to the NAGSA dehydrogenase family. Type 2 subfamily.

It is found in the cytoplasm. It carries out the reaction N-acetyl-L-glutamate 5-semialdehyde + phosphate + NADP(+) = N-acetyl-L-glutamyl 5-phosphate + NADPH + H(+). The protein operates within amino-acid biosynthesis; L-arginine biosynthesis; N(2)-acetyl-L-ornithine from L-glutamate: step 3/4. Its function is as follows. Catalyzes the NADPH-dependent reduction of N-acetyl-5-glutamyl phosphate to yield N-acetyl-L-glutamate 5-semialdehyde. This is N-acetyl-gamma-glutamyl-phosphate reductase from Brucella ovis (strain ATCC 25840 / 63/290 / NCTC 10512).